The following is a 431-amino-acid chain: Bone morphogenetic protein 7 (431 aa).

The first 29 residues, methionine 1 to alanine 29, serve as a signal peptide directing secretion. Positions aspartate 30–arginine 292 are excised as a propeptide. N-linked (GlcNAc...) asparagine glycans are attached at residues asparagine 187, asparagine 302, asparagine 321, and asparagine 372. Residues isoleucine 291 to glutamate 311 are disordered. Intrachain disulfides connect cysteine 330-cysteine 396, cysteine 359-cysteine 428, and cysteine 363-cysteine 430.

It belongs to the TGF-beta family. As to quaternary structure, homodimer; disulfide-linked. Interacts with SOSTDC1. Interacts with TWSG1. Interacts with FBN1 (via N-terminal domain) and FBN2. Interacts with type I receptor ACVR1. Interacts with type II receptor ACVR2A. Interacts with NOG; this interaction inhibits canonical BMP signaling. Interacts with SCUBE3. Interacts with ERFE; the interaction inhibits BMP-induced transcription of HAMP. Interacts with TGFBR3. Post-translationally, several N-termini starting at positions 293, 300, 315 and 316 have been identified by direct sequencing resulting in secretion of different mature forms. Expressed in the kidney and bladder. Lower levels seen in the brain.

The protein localises to the secreted. Growth factor of the TGF-beta superfamily that plays important role in various biological processes, including embryogenesis, hematopoiesis, neurogenesis and skeletal morphogenesis. Initiates the canonical BMP signaling cascade by associating with type I receptor ACVR1 and type II receptor ACVR2A. Once all three components are bound together in a complex at the cell surface, ACVR2A phosphorylates and activates ACVR1. In turn, ACVR1 propagates signal by phosphorylating SMAD1/5/8 that travel to the nucleus and act as activators and repressors of transcription of target genes. For specific functions such as growth cone collapse in developing spinal neurons and chemotaxis of monocytes, also uses BMPR2 as type II receptor. Can also signal through non-canonical pathways such as P38 MAP kinase signaling cascade that promotes brown adipocyte differentiation through activation of target genes, including members of the SOX family of transcription factors. Promotes the expression of HAMP, this is repressed by its interaction with ERFE. This chain is Bone morphogenetic protein 7 (BMP7), found in Homo sapiens (Human).